A 115-amino-acid chain; its full sequence is Macrophage migration inhibitory factor (115 aa).

Proline 2 functions as the Proton acceptor; via imino nitrogen in the catalytic mechanism. Substrate is bound by residues lysine 33 and isoleucine 65. Lysine 78 carries the post-translational modification N6-acetyllysine; alternate. Lysine 78 is subject to N6-succinyllysine; alternate. A substrate-binding site is contributed by asparagine 98.

It belongs to the MIF family. As to quaternary structure, homotrimer. Interacts with CXCR2 extracellular domain. Interacts with the CD74 extracellular domain, USO1, COPS5 and BNIPL.

The protein localises to the secreted. It localises to the cytoplasm. The enzyme catalyses 3-phenylpyruvate = enol-phenylpyruvate. The catalysed reaction is L-dopachrome = 5,6-dihydroxyindole-2-carboxylate. Functionally, pro-inflammatory cytokine involved in the innate immune response to bacterial pathogens. The expression of MIF at sites of inflammation suggests a role as mediator in regulating the function of macrophages in host defense. Counteracts the anti-inflammatory activity of glucocorticoids. Has phenylpyruvate tautomerase and dopachrome tautomerase activity (in vitro), but the physiological substrate is not known. It is not clear whether the tautomerase activity has any physiological relevance, and whether it is important for cytokine activity. The sequence is that of Macrophage migration inhibitory factor from Homo sapiens (Human).